The sequence spans 147 residues: Holdfast attachment protein A (147 aa).

In terms of biological role, involved in attachment of the holdfast to the cell. The holdfast is a structure that allows the bacteria to firmly adheres to surfaces. The chain is Holdfast attachment protein A (hfaA) from Caulobacter vibrioides (strain ATCC 19089 / CIP 103742 / CB 15) (Caulobacter crescentus).